A 274-amino-acid chain; its full sequence is Large ribosomal subunit protein uL2 (274 aa).

2 disordered regions span residues 28–53 and 221–274; these read KPYA…TTRH and RGTA…RTKK. Positions 39–48 are enriched in low complexity; sequence KSGGRNNNGR. Over residues 253 to 274 the composition is skewed to basic residues; that stretch reads KGKKTRKNKRTEHFIVHRRTKK.

The protein belongs to the universal ribosomal protein uL2 family. In terms of assembly, part of the 50S ribosomal subunit. Forms a bridge to the 30S subunit in the 70S ribosome.

Functionally, one of the primary rRNA binding proteins. Required for association of the 30S and 50S subunits to form the 70S ribosome, for tRNA binding and peptide bond formation. It has been suggested to have peptidyltransferase activity; this is somewhat controversial. Makes several contacts with the 16S rRNA in the 70S ribosome. The chain is Large ribosomal subunit protein uL2 from Proteus mirabilis (strain HI4320).